A 117-amino-acid polypeptide reads, in one-letter code: Hemerythrin subunit alpha (117 aa).

The Fe cation site is built by His24, His53, Glu57, His72, His76, His105, and Asp110.

It belongs to the hemerythrin family. As to quaternary structure, octamer composed of two types of chains: alpha and beta.

In terms of biological role, hemerythrin is a respiratory protein in blood cells of certain marine worms. The oxygen-binding site in each chain contains two iron atoms. In Lingula reevii (Inarticulated brachiopod), this protein is Hemerythrin subunit alpha.